The following is a 722-amino-acid chain: Polyribonucleotide nucleotidyltransferase (722 aa).

Aspartate 487 and aspartate 493 together coordinate Mg(2+). The region spanning 554-613 (PRIETFKIPTDKIREVIGTGGKVIREIVEKTGAKVNIEDDGTVKVASSDGESIKAAIKWI) is the KH domain. The 69-residue stretch at 623–691 (GEIYEGTVVK…DRGKTRLSMK (69 aa)) folds into the S1 motif domain. Residues 697 to 722 (TGEDLEAKQKAEAKAEGEAPAQAAGE) are disordered. Positions 701–713 (LEAKQKAEAKAEG) are enriched in basic and acidic residues.

It belongs to the polyribonucleotide nucleotidyltransferase family. It depends on Mg(2+) as a cofactor.

The protein resides in the cytoplasm. The enzyme catalyses RNA(n+1) + phosphate = RNA(n) + a ribonucleoside 5'-diphosphate. Functionally, involved in mRNA degradation. Catalyzes the phosphorolysis of single-stranded polyribonucleotides processively in the 3'- to 5'-direction. The polypeptide is Polyribonucleotide nucleotidyltransferase (Rhodopseudomonas palustris (strain TIE-1)).